Here is a 433-residue protein sequence, read N- to C-terminus: Enolase (433 aa).

Glutamine 167 lines the (2R)-2-phosphoglycerate pocket. The active-site Proton donor is glutamate 209. 3 residues coordinate Mg(2+): aspartate 246, glutamate 291, and aspartate 318. Lysine 343, arginine 372, serine 373, and lysine 394 together coordinate (2R)-2-phosphoglycerate. Lysine 343 (proton acceptor) is an active-site residue.

This sequence belongs to the enolase family. Component of the RNA degradosome, a multiprotein complex involved in RNA processing and mRNA degradation. It depends on Mg(2+) as a cofactor.

The protein localises to the cytoplasm. It localises to the secreted. Its subcellular location is the cell surface. The catalysed reaction is (2R)-2-phosphoglycerate = phosphoenolpyruvate + H2O. It functions in the pathway carbohydrate degradation; glycolysis; pyruvate from D-glyceraldehyde 3-phosphate: step 4/5. Its function is as follows. Catalyzes the reversible conversion of 2-phosphoglycerate (2-PG) into phosphoenolpyruvate (PEP). It is essential for the degradation of carbohydrates via glycolysis. In Edwardsiella ictaluri (strain 93-146), this protein is Enolase.